Consider the following 335-residue polypeptide: Glycerol-3-phosphate dehydrogenase [NAD(P)+] (335 aa).

Residues serine 10, phenylalanine 11, arginine 31, and lysine 105 each coordinate NADPH. Residues lysine 105, glycine 136, and serine 138 each coordinate sn-glycerol 3-phosphate. Alanine 140 contributes to the NADPH binding site. 5 residues coordinate sn-glycerol 3-phosphate: lysine 191, aspartate 244, serine 254, arginine 255, and asparagine 256. Lysine 191 (proton acceptor) is an active-site residue. Arginine 255 is an NADPH binding site. Residues valine 279 and glutamate 281 each contribute to the NADPH site.

Belongs to the NAD-dependent glycerol-3-phosphate dehydrogenase family.

The protein localises to the cytoplasm. The enzyme catalyses sn-glycerol 3-phosphate + NAD(+) = dihydroxyacetone phosphate + NADH + H(+). It catalyses the reaction sn-glycerol 3-phosphate + NADP(+) = dihydroxyacetone phosphate + NADPH + H(+). It functions in the pathway membrane lipid metabolism; glycerophospholipid metabolism. Functionally, catalyzes the reduction of the glycolytic intermediate dihydroxyacetone phosphate (DHAP) to sn-glycerol 3-phosphate (G3P), the key precursor for phospholipid synthesis. The sequence is that of Glycerol-3-phosphate dehydrogenase [NAD(P)+] from Myxococcus xanthus (strain DK1622).